Here is a 263-residue protein sequence, read N- to C-terminus: MASLWLLSCFSLVGAAFGCGVPAIHPVLSGLSRIVNGEDAVPGSWPWQVSLQDKTGFHFCGGSLISEDWVVTAAHCGVRTSDVVVAGEFDQGSDEENIQVLKIAKVFKNPKFSILTVNNDITLLKLATPARFSQTVSAVCLPSADDDFPAGTLCATTGWGKTKYNANKTPDKLQQAALPLLSNAECKKSWGRRITDVMICAGASGVSSCMGDSGGPLVCQKDGAWTLVGIVSWGSDTCSTSSPGVYARVTKLIPWVQKILAAN.

Residues 1–18 (MASLWLLSCFSLVGAAFG) form the signal peptide. Disulfide bonds link C19–C140, C60–C76, C154–C219, C186–C200, and C209–C238. In terms of domain architecture, Peptidase S1 spans 34-261 (IVNGEDAVPG…LIPWVQKILA (228 aa)). The active-site Charge relay system is the H75. S93 is modified (phosphoserine). The Charge relay system role is filled by D120. The active-site Charge relay system is S213.

Belongs to the peptidase S1 family.

It is found in the secreted. It localises to the extracellular space. The enzyme catalyses Preferential cleavage: Tyr-|-Xaa, Trp-|-Xaa, Phe-|-Xaa, Leu-|-Xaa.. The chain is Chymotrypsinogen B from Homo sapiens (Human).